A 438-amino-acid chain; its full sequence is Leupeptin-inactivating enzyme 1 (438 aa).

The signal sequence occupies residues 1–37; that stretch reads MSLSVSRRLAAVTAFAVAGLFASAVPAALAAPSAVAA. Zn(2+) contacts are provided by His-125 and Asp-137. The active-site Proton acceptor is Glu-171. The Zn(2+) site is built by Glu-172, Asp-200, and His-287. An intrachain disulfide couples Cys-285 to Cys-290. Positions 321–438 constitute a P/Homo B domain; sequence VPPGQSFENT…GYINSWKITF (118 aa).

The protein belongs to the peptidase M28 family. M28A subfamily. Monomer. It depends on Zn(2+) as a cofactor.

The protein resides in the secreted. With respect to regulation, activity is inhibited by metalloprotease inhibitors and activated by Mg(2+) and Ca(2+). A leucine-specific metalloprotease that plays a role in controlling the amount of leupeptin during colony development. Degrades leupeptin into three components, acetyl-leucine, leucine and argininal. Has a strict preference for leucine at the P1 site. The chain is Leupeptin-inactivating enzyme 1 (lieA) from Streptomyces exfoliatus (Streptomyces hydrogenans).